Reading from the N-terminus, the 285-residue chain is Probable enoyl-CoA hydratase echA12 (285 aa).

This sequence belongs to the enoyl-CoA hydratase/isomerase family.

The enzyme catalyses a (3S)-3-hydroxyacyl-CoA = a (2E)-enoyl-CoA + H2O. The catalysed reaction is a 4-saturated-(3S)-3-hydroxyacyl-CoA = a (3E)-enoyl-CoA + H2O. Its function is as follows. Could possibly oxidize fatty acids using specific components. The polypeptide is Probable enoyl-CoA hydratase echA12 (echA12) (Mycobacterium bovis (strain ATCC BAA-935 / AF2122/97)).